The following is a 143-amino-acid chain: Large ribosomal subunit protein uL11 (143 aa).

It belongs to the universal ribosomal protein uL11 family. Part of the ribosomal stalk of the 50S ribosomal subunit. Interacts with L10 and the large rRNA to form the base of the stalk. L10 forms an elongated spine to which L12 dimers bind in a sequential fashion forming a multimeric L10(L12)X complex. One or more lysine residues are methylated.

In terms of biological role, forms part of the ribosomal stalk which helps the ribosome interact with GTP-bound translation factors. This chain is Large ribosomal subunit protein uL11, found in Pseudomonas entomophila (strain L48).